A 1007-amino-acid chain; its full sequence is uncharacterized protein (1007 aa).

The signal sequence occupies residues 1-51 (MTTPISNSPSSIPTVTVSTTTASSGSLGTSTVSSTTTSTSVAQTATTTSSA). Positions 1–96 (MTTPISNSPS…SATANKTSSA (96 aa)) are enriched in low complexity. Disordered stretches follow at residues 1–186 (MTTP…GNPI), 200–224 (TYTTSPRNENIFSPGPEGLPNMSLP), 387–533 (NWGS…GPDI), 543–562 (TVYPGENGGSTEGPLPANQN), 578–645 (ETII…GPDI), 655–674 (TVYPGENGGSTEGPLPANQN), and 712–757 (DLED…GPDI). The span at 118-163 (DGEVSSNYDDVDTPTNSSDSTVDSDYQDVETQYKTISNNGENTYET) shows a compositional bias: polar residues. The segment covering 167 to 176 (HGEKNTHVQE) has biased composition (basic and acidic residues). 2 stretches are compositionally biased toward polar residues: residues 177 to 186 (SHASGTGNPI) and 200 to 210 (TYTTSPRNENI). Low complexity predominate over residues 423 to 442 (VINVNVNVGGTNVNIGDTNV). A compositionally biased stretch (polar residues) spans 443–453 (SKGSGTPTSSQ). Residues 469-491 (IDTNNQTNGDINTNDNSNNVDGS) show a composition bias toward low complexity. A compositionally biased stretch (polar residues) spans 507 to 523 (DTESTNGNDSGKTTSTE). The segment covering 597–618 (ADADVEDTSDTDSGIGDDDGVS) has biased composition (acidic residues). The segment covering 619 to 635 (DTESTNGNNSGKTTSTE) has biased composition (low complexity). A compositionally biased stretch (acidic residues) spans 712–730 (DLEDVSDADSGFGDDDGIS). Over residues 732–743 (TESTNGNDSGKN) the composition is skewed to polar residues.

This sequence belongs to the chlamydial CPn_0572/CT_456/TC_0741 family.

This is an uncharacterized protein from Chlamydia muridarum (strain MoPn / Nigg).